A 496-amino-acid polypeptide reads, in one-letter code: Cytochrome P450 71D179 (496 aa).

Residues 1–21 (MDISISWVVIIVSVLSYLILM) form a helical; Signal-anchor for type II membrane protein membrane-spanning segment. Cysteine 435 is a heme binding site.

It belongs to the cytochrome P450 family. The cofactor is heme.

The protein localises to the membrane. It functions in the pathway secondary metabolite biosynthesis; terpenoid biosynthesis. Functionally, involved in the biosynthesis of phenolic monoterpenes natural products thymol and carvacrol which have a broad range of biological activities acting as antimicrobial compounds, insecticides, antioxidants and pharmaceutical agents. Catalyzes probably the C3-hydroxylation of gamma-terpinene to produce thymol. The sequence is that of Cytochrome P450 71D179 from Thymus vulgaris (Thyme).